The chain runs to 213 residues: Orotate phosphoribosyltransferase (213 aa).

Lys-26 is a 5-phospho-alpha-D-ribose 1-diphosphate binding site. Phe-34–Phe-35 is a binding site for orotate. Residues Tyr-72 to Lys-73, Arg-99, Lys-100, Lys-103, His-105, and Asp-124 to Ala-132 each bind 5-phospho-alpha-D-ribose 1-diphosphate. The orotate site is built by Thr-128 and Arg-156.

The protein belongs to the purine/pyrimidine phosphoribosyltransferase family. PyrE subfamily. As to quaternary structure, homodimer. Mg(2+) is required as a cofactor.

The catalysed reaction is orotidine 5'-phosphate + diphosphate = orotate + 5-phospho-alpha-D-ribose 1-diphosphate. Its pathway is pyrimidine metabolism; UMP biosynthesis via de novo pathway; UMP from orotate: step 1/2. Its function is as follows. Catalyzes the transfer of a ribosyl phosphate group from 5-phosphoribose 1-diphosphate to orotate, leading to the formation of orotidine monophosphate (OMP). This is Orotate phosphoribosyltransferase from Cronobacter sakazakii (strain ATCC BAA-894) (Enterobacter sakazakii).